A 401-amino-acid chain; its full sequence is MIIHPKTRGFICTTTHPVGCEYNVLEQIQSTRARGVRSNGPKKVLVIGASSGYGLATRISAAFGFGADTLGVFFEKPGTEKKPGTAGWYNAAAFDKSAKNAGLYSRSINGDAFSDEMRAKVIEIIKSEMGGHVDLVVYSLASPLRKMPSTGEIKRSVLKPIGVAHISNAIDTNKDQIIQATVEPATEQEIADTVAVMGGQDWELWINALTQADVLAPQTRTVAFSYIGTEITWPIYWHGALGKAKADLDATSRRLDARLQALGGGANVAVLKSVVTQASAAIPALPLYIAIVFKVMKEKGLHEGTIEQADRLLRERLYREDGQPAAVDEEHRLRLDDWELREDVQATCKVIWKQVTNENLFQLTDYANYKRDFLKLFGFERADVDYDADVNPEVTFDVIEL.

Residues 48-53, 74-75, 111-112, and 140-141 each bind NAD(+); these read GASSGY, FE, DA, and LA. Tyr-226 provides a ligand contact to substrate. The Proton donor role is filled by Tyr-236. NAD(+)-binding positions include Lys-245 and 274-276; that span reads VVT.

The protein belongs to the TER reductase family. As to quaternary structure, monomer.

It catalyses the reaction a 2,3-saturated acyl-[ACP] + NAD(+) = a (2E)-enoyl-[ACP] + NADH + H(+). Its pathway is lipid metabolism; fatty acid biosynthesis. Functionally, involved in the final reduction of the elongation cycle of fatty acid synthesis (FAS II). Catalyzes the reduction of a carbon-carbon double bond in an enoyl moiety that is covalently linked to an acyl carrier protein (ACP). The polypeptide is Enoyl-[acyl-carrier-protein] reductase [NADH] (Xylella fastidiosa (strain 9a5c)).